The chain runs to 148 residues: Large ribosomal subunit protein uL15 (148 aa).

The tract at residues 14-54 (HRKKRVGCGEGGGHGKTSGRGGKGQTARSGSSIRPGFEGGQ) is disordered. The span at 21–37 (CGEGGGHGKTSGRGGKG) shows a compositional bias: gly residues.

Belongs to the universal ribosomal protein uL15 family. In terms of assembly, part of the 50S ribosomal subunit.

Its function is as follows. Binds to the 23S rRNA. The protein is Large ribosomal subunit protein uL15 of Opitutus terrae (strain DSM 11246 / JCM 15787 / PB90-1).